Here is a 29-residue protein sequence, read N- to C-terminus: Cyclotide mela-2 (29 aa).

The cyclopeptide (Gly-Asp) cross-link spans 1–29; sequence GKPTCGETCFKGKCYTPGCTCSYPLCKKD. Disulfide bonds link C5-C19, C9-C21, and C14-C26.

This is a cyclic peptide. In terms of processing, contains 3 disulfide bonds.

Its function is as follows. Probably participates in a plant defense mechanism (Potential). Binds to and induces leakage in phospholipd membranes, particularly ones containing 1-palmitoyl-2-oleophosphatidylethanolamine (POPE). In vitro, displays cytotoxicity against cultured cells but no hemolytic activity towards fresh erythrocytes. Not active against Gram-negative bacterium E.coli ATCC 25922 or Gram-positive bacterium S.aureus ATCC 25923 up to a concentration of 64 uM. The chain is Cyclotide mela-2 from Melicytus latifolius (Norfolk Island mahoe).